The sequence spans 562 residues: Adenylate kinase isoenzyme 5 (562 aa).

Adenylate kinase stretches follow at residues 133–316 (KIIL…MAVD) and 377–559 (KIIF…TAID). Residue 142-147 (GSGKGT) coordinates ATP. The interval 162–193 (SVGELLRKKIHSTSSNRKWSLIAKIITTGELA) is NMP 1. AMP is bound by residues R168, 191-193 (ELA), 219-222 (GFPR), and Q226. Residues 256–266 (KRAEQQGRPDD) form an LID 1 region. R257 contacts ATP. AMP contacts are provided by R263 and R274. ATP is bound at residue 386–391 (GSGKGT). The NMP 2 stretch occupies residues 406-435 (STDELLQNELSSESGRSKLIRDIMERGELV). AMP contacts are provided by residues T407, 433–435 (ELV), 462–465 (GYPR), and Q469. The interval 499 to 509 (QRSRNSPQADD) is LID 2. R500 contributes to the ATP binding site. R517 contributes to the AMP binding site. G545 serves as a coordination point for ATP.

The protein belongs to the adenylate kinase family. In terms of assembly, monomer.

The protein resides in the cytoplasm. It carries out the reaction AMP + ATP = 2 ADP. It catalyses the reaction a 2'-deoxyribonucleoside 5'-diphosphate + ATP = a 2'-deoxyribonucleoside 5'-triphosphate + ADP. The catalysed reaction is a ribonucleoside 5'-diphosphate + ATP = a ribonucleoside 5'-triphosphate + ADP. In terms of biological role, nucleoside monophosphate (NMP) kinase that catalyzes the reversible transfer of the terminal phosphate group between nucleoside triphosphates and monophosphates. Active on AMP and dAMP with ATP as a donor. When GTP is used as phosphate donor, the enzyme phosphorylates AMP, CMP, and to a small extent dCMP. Also displays broad nucleoside diphosphate kinase activity. This chain is Adenylate kinase isoenzyme 5 (Ak5), found in Bos taurus (Bovine).